The chain runs to 262 residues: Protein NEGATIVE GRAVITROPIC RESPONSE OF ROOTS (262 aa).

The interval 1 to 40 is disordered; that stretch reads MKFFNWMQNKLGGKQENRKSNTSTSTTYAKPEPREEFSDW. The short motif at 43–49 is the IGT motif element; it reads SLLAIGT.

The protein belongs to the LAZY family.

Its function is as follows. Involved in the control of root gravitropism. The sequence is that of Protein NEGATIVE GRAVITROPIC RESPONSE OF ROOTS from Medicago truncatula (Barrel medic).